Here is a 397-residue protein sequence, read N- to C-terminus: Lysophospholipid transporter LplT (397 aa).

Residues 1-17 are Periplasmic-facing; the sequence is MSESVHTNTSLWSKGMK. The chain crosses the membrane as a helical span at residues 18–38; it reads AVIVAQFLSAFGDNALLFATL. The Cytoplasmic segment spans residues 39-52; sequence ALLKAQFYPEWSQP. A helical membrane pass occupies residues 53-73; sequence ILQMVFVGAYILFAPFVGQVA. Residues 74-90 are Periplasmic-facing; it reads DSFAKGRVMMFANGLKL. Residues 91-111 traverse the membrane as a helical segment; that stretch reads LGAASICFGINPFLGYTLVGV. At 112–144 the chain is on the cytoplasmic side; it reads GAAAYSPAKYGILGELTTGSKLVKANGLMEAST. Residues 145–165 form a helical membrane-spanning segment; sequence IAAILLGSVAGGVLADWHVLV. A topological domain (periplasmic) is located at residue A166. A helical membrane pass occupies residues 167–187; sequence LAACALAYGGAVVANIYIPKL. Residues 188–226 lie on the Cytoplasmic side of the membrane; sequence AAARPGQSWNLINMTRSFLNACTSLWRNGETRFSLVGTS. A helical transmembrane segment spans residues 227-247; it reads LFWGAGVTLRFLLVLWVPVAL. The Periplasmic segment spans residues 248–256; the sequence is GITDNSTPT. The helical transmembrane segment at 257–277 threads the bilayer; it reads YLNAMVAIGIVVGAGAAAKLV. Over 278–280 the chain is Cytoplasmic; it reads TLE. A helical transmembrane segment spans residues 281–301; that stretch reads TVSRCMPAGILIGVVVLIFSL. Residues 302-304 lie on the Periplasmic side of the membrane; sequence QHE. The chain crosses the membrane as a helical span at residues 305 to 325; that stretch reads LLPAYALLMLIGVMGGFFVVP. Residues 326–343 lie on the Cytoplasmic side of the membrane; sequence LNALLQERGKKSVGAGNA. The helical transmembrane segment at 344 to 364 threads the bilayer; sequence IAVQNLGENSAMLLMLGIYSL. Over 365–366 the chain is Periplasmic; sequence AV. The chain crosses the membrane as a helical span at residues 367 to 387; it reads MVGIPVVPIGIGFGALFALAI. Residues 388 to 397 are Cytoplasmic-facing; that stretch reads TALWIWQRRH.

This sequence belongs to the major facilitator superfamily. LplT (TC 2.A.1.42) family.

Its subcellular location is the cell inner membrane. Functionally, catalyzes the facilitated diffusion of 2-acyl-glycero-3-phosphoethanolamine (2-acyl-GPE) into the cell. The polypeptide is Lysophospholipid transporter LplT (Shigella boydii serotype 4 (strain Sb227)).